The following is a 284-amino-acid chain: Tropomyosin isoforms a/b/d/f (284 aa).

Residues 1 to 284 (MDAIKKKMQA…DSTFQELSGY (284 aa)) adopt a coiled-coil conformation. A disordered region spans residues 40–78 (EEELRDTQKKMTQTGDDLDKAQEDLSAATSKLEEKEKTV).

The protein belongs to the tropomyosin family. As to expression, isoform a and isoform d are expressed in body wall muscles, vulva, anus muscles and male tail muscles. Located to the myofibrils of thin actin filaments.

The protein localises to the cytoplasm. The protein resides in the myofibril. It localises to the sarcomere. Its subcellular location is the i band. In terms of biological role, tropomyosin, in association with the troponin complex, plays a central role in the calcium dependent regulation of muscle contraction. Involved in muscle actin filament organization and muscle arm extension and morphology. Protects actin filaments from depolymerization by unc-60 in vitro. Also has a role in male mating behavior by regulating the copulatory spicules. Binds to F-actin. This Caenorhabditis elegans protein is Tropomyosin isoforms a/b/d/f (lev-11).